A 190-amino-acid chain; its full sequence is Adenylate kinase (190 aa).

Residue Gly-11–Thr-16 coordinates ATP. Positions Ser-31–Val-60 are NMP. AMP is bound by residues Thr-32, Arg-37, Glu-58–Val-60, Gly-86–Arg-89, and Gln-93. Residues Glu-127–Asp-137 are LID. An ATP-binding site is contributed by Arg-128. Residues Arg-134 and Arg-146 each contribute to the AMP site. Gly-174 contributes to the ATP binding site.

This sequence belongs to the adenylate kinase family. In terms of assembly, monomer.

The protein localises to the cytoplasm. The enzyme catalyses AMP + ATP = 2 ADP. It participates in purine metabolism; AMP biosynthesis via salvage pathway; AMP from ADP: step 1/1. Functionally, catalyzes the reversible transfer of the terminal phosphate group between ATP and AMP. Plays an important role in cellular energy homeostasis and in adenine nucleotide metabolism. In Flavobacterium johnsoniae (strain ATCC 17061 / DSM 2064 / JCM 8514 / BCRC 14874 / CCUG 350202 / NBRC 14942 / NCIMB 11054 / UW101) (Cytophaga johnsonae), this protein is Adenylate kinase.